Here is a 354-residue protein sequence, read N- to C-terminus: 3'-5' exonuclease (354 aa).

The segment at 1 to 120 (MEKYLIKMPI…PSPEKEKPEK (120 aa)) is disordered. Basic and acidic residues-rich tracts occupy residues 13-23 (KASEVPKDKAV), 36-50 (TKNDTPKELKNKENA), and 71-91 (KNLDTPETKAEKIATEEENPP). Serine 104, serine 110, and serine 112 each carry phosphoserine. The 3'-5' exonuclease domain occupies 146-314 (VLQWVEKQKD…GQVIYRELER (169 aa)). Residues aspartate 163, glutamate 165, and aspartate 301 each coordinate Mg(2+).

This sequence belongs to the WRNexo family.

It localises to the nucleus. Its function is as follows. Has exonuclease activity on both single-stranded and duplex templates bearing overhangs, but not blunt ended duplex DNA, and cleaves in a 3'-5' direction. Essential for the formation of DNA replication focal centers. Has an important role in maintaining genome stability. This Drosophila erecta (Fruit fly) protein is 3'-5' exonuclease.